A 426-amino-acid chain; its full sequence is Glutamate-1-semialdehyde 2,1-aminomutase (426 aa).

An N6-(pyridoxal phosphate)lysine modification is found at Lys-265.

It belongs to the class-III pyridoxal-phosphate-dependent aminotransferase family. HemL subfamily. In terms of assembly, homodimer. Requires pyridoxal 5'-phosphate as cofactor.

It localises to the cytoplasm. It catalyses the reaction (S)-4-amino-5-oxopentanoate = 5-aminolevulinate. Its pathway is porphyrin-containing compound metabolism; protoporphyrin-IX biosynthesis; 5-aminolevulinate from L-glutamyl-tRNA(Glu): step 2/2. The polypeptide is Glutamate-1-semialdehyde 2,1-aminomutase (Escherichia coli (strain K12 / DH10B)).